The following is a 278-amino-acid chain: Large ribosomal subunit protein uL2 (278 aa).

Disordered regions lie at residues 26-57 (RSTP…QGGG) and 225-278 (VMNP…NKKR). Positions 258–278 (RSPKKASNKYIVRRRKTNKKR) are enriched in basic residues.

The protein belongs to the universal ribosomal protein uL2 family. As to quaternary structure, part of the 50S ribosomal subunit. Forms a bridge to the 30S subunit in the 70S ribosome.

One of the primary rRNA binding proteins. Required for association of the 30S and 50S subunits to form the 70S ribosome, for tRNA binding and peptide bond formation. It has been suggested to have peptidyltransferase activity; this is somewhat controversial. Makes several contacts with the 16S rRNA in the 70S ribosome. This chain is Large ribosomal subunit protein uL2, found in Streptomyces coelicolor (strain ATCC BAA-471 / A3(2) / M145).